Here is a 1355-residue protein sequence, read N- to C-terminus: Phosphoribosylformylglycinamidine synthase (1355 aa).

ATP contacts are provided by residues 326-337 (GAETGTGGRLRD) and 406-408 (IGF). Glutamate 743, asparagine 747, and aspartate 911 together coordinate Mg(2+). Serine 913 provides a ligand contact to ATP. Positions 1087-1325 (KVAVIREEGS…LSWQWPFMPE (239 aa)) constitute a Glutamine amidotransferase type-1 domain. Residue cysteine 1182 is the Nucleophile of the active site. Active-site residues include histidine 1310 and glutamate 1312.

It in the N-terminal section; belongs to the FGAMS family.

The protein localises to the cytoplasm. It catalyses the reaction N(2)-formyl-N(1)-(5-phospho-beta-D-ribosyl)glycinamide + L-glutamine + ATP + H2O = 2-formamido-N(1)-(5-O-phospho-beta-D-ribosyl)acetamidine + L-glutamate + ADP + phosphate + H(+). It functions in the pathway purine metabolism; IMP biosynthesis via de novo pathway; 5-amino-1-(5-phospho-D-ribosyl)imidazole from N(2)-formyl-N(1)-(5-phospho-D-ribosyl)glycinamide: step 1/2. Phosphoribosylformylglycinamidine synthase involved in the purines biosynthetic pathway. Catalyzes the ATP-dependent conversion of formylglycinamide ribonucleotide (FGAR) and glutamine to yield formylglycinamidine ribonucleotide (FGAM) and glutamate. The chain is Phosphoribosylformylglycinamidine synthase (purL) from Dictyostelium discoideum (Social amoeba).